The following is a 407-amino-acid chain: Uronyl 2-sulfotransferase (407 aa).

The segment at 1 to 20 (MKKKQQQHPGGGTDPWPHGA) is disordered. Residues 1 to 49 (MKKKQQQHPGGGTDPWPHGAPVGGAPPCLGSCKRRIPLLPFLRFSLRDY) lie on the Cytoplasmic side of the membrane. Residues 50–70 (GFCMATLLVFCLGSLFYQLSG) form a helical; Signal-anchor for type II membrane protein membrane-spanning segment. Residues 71-407 (GPPRFLLDLR…EKWLEDIYKR (337 aa)) are Lumenal-facing. N-linked (GlcNAc...) asparagine glycans are attached at residues Asn-85, Asn-141, and Asn-156. His-169 is a catalytic residue. Residues Asn-174 and Asn-320 are each glycosylated (N-linked (GlcNAc...) asparagine). The span at 386 to 400 (TEEPIDDEEQDDEKW) shows a compositional bias: acidic residues. Residues 386 to 407 (TEEPIDDEEQDDEKWLEDIYKR) form a disordered region.

The protein belongs to the sulfotransferase 3 family.

Its subcellular location is the golgi apparatus membrane. Sulfotransferase that catalyzes the transfer of sulfate to the position 2 of uronyl residues in glycosaminoglycan chains. Has mainly activity toward iduronyl residues in dermatan sulfate, and weaker activity toward glucuronyl residues of chondroitin sulfate. Has no activity toward desulfated N-resulfated heparin. The protein is Uronyl 2-sulfotransferase of Mus musculus (Mouse).